A 474-amino-acid chain; its full sequence is 3-isopropylmalate dehydratase large subunit (474 aa).

Positions 355, 415, and 418 each coordinate [4Fe-4S] cluster.

It belongs to the aconitase/IPM isomerase family. LeuC type 1 subfamily. Heterodimer of LeuC and LeuD. [4Fe-4S] cluster is required as a cofactor.

The enzyme catalyses (2R,3S)-3-isopropylmalate = (2S)-2-isopropylmalate. Its pathway is amino-acid biosynthesis; L-leucine biosynthesis; L-leucine from 3-methyl-2-oxobutanoate: step 2/4. Its function is as follows. Catalyzes the isomerization between 2-isopropylmalate and 3-isopropylmalate, via the formation of 2-isopropylmaleate. The sequence is that of 3-isopropylmalate dehydratase large subunit from Shewanella sp. (strain MR-7).